The following is a 214-amino-acid chain: A-type ATP synthase subunit D (214 aa).

The protein belongs to the V-ATPase D subunit family. In terms of assembly, has multiple subunits with at least A(3), B(3), C, D, E, F, H, I and proteolipid K(x).

The protein localises to the cell membrane. Its function is as follows. Component of the A-type ATP synthase that produces ATP from ADP in the presence of a proton gradient across the membrane. This Pyrococcus abyssi (strain GE5 / Orsay) protein is A-type ATP synthase subunit D.